Consider the following 140-residue polypeptide: RxLR effector protein Avh23 (140 aa).

The N-terminal stretch at methionine 1–alanine 21 is a signal peptide. The RxLR-dEER motif lies at arginine 54 to arginine 72. One copy of the ADA2-binding IR1 repeat lies at glutamine 100–aspartate 113. The ADA2-binding IR2 repeat unit spans residues glutamine 114–alanine 127.

The protein belongs to the RxLR effector family. As to quaternary structure, interacts with host histone acetyl transferase SAGA complex subunit ADA2.

The protein localises to the secreted. It localises to the host nucleus. The protein resides in the host cytoplasm. In terms of biological role, effector that suppresses plant defense responses during the early stages of pathogen infection. Suppresses cell death induced by effectors and PAMPs in plant hosts. Acts as a modulator of histone acetyltransferase (HAT) in plants. Avh23 binds to the ADA2 subunit of the HAT complex SAGA and disrupts its assembly by interfering with the association of ADA2 with the catalytic subunit GCN5. As such, Avh23 suppresses H3K9 acetylation mediated by the ADA2/GCN5 module and increases plant susceptibility. This Phytophthora sojae (Soybean stem and root rot agent) protein is RxLR effector protein Avh23.